The chain runs to 485 residues: uncharacterized protein (485 aa).

The Cytoplasmic portion of the chain corresponds to 1-30; it reads MFSWANIGSNEYLPLKNDRKAYLNQWAKRS. Residues 31 to 51 traverse the membrane as a helical segment; that stretch reads GLAIAAICILGILILAIVKLF. The Extracellular portion of the chain corresponds to 52–485; the sequence is CFKAIIFPIV…DIEQAYSKLI (434 aa). Asn67 is a glycosylation site (N-linked (GlcNAc...) asparagine). Positions 74–404 are phosphodiesterase; sequence STVIVISLDG…YEPLGVHGYD (331 aa). Thr118 functions as the Nucleophile in the catalytic mechanism. N-linked (GlcNAc...) asparagine glycans are attached at residues Asn306, Asn338, Asn453, and Asn467.

The protein belongs to the nucleotide pyrophosphatase/phosphodiesterase family.

Its subcellular location is the membrane. This is an uncharacterized protein from Schizosaccharomyces pombe (strain 972 / ATCC 24843) (Fission yeast).